A 94-amino-acid chain; its full sequence is Small ribosomal subunit protein uS19 (94 aa).

It belongs to the universal ribosomal protein uS19 family.

Functionally, protein S19 forms a complex with S13 that binds strongly to the 16S ribosomal RNA. The chain is Small ribosomal subunit protein uS19 from Elusimicrobium minutum (strain Pei191).